The primary structure comprises 194 residues: Dihydrofolate reductase HdrB (194 aa).

The DHFR domain maps to 18-194; that stretch reads RFVLVAAVAD…ADRGAEESDE (177 aa). Residues A24 and 30 to 36 contribute to the NADP(+) site; that span reads VIGRDGT. A substrate-binding site is contributed by D44. Residue 62–63 participates in NADP(+) binding; sequence KT. Substrate contacts are provided by R69 and R78. NADP(+)-binding positions include 84 to 85 and 123 to 130; these read TT and GGATVYEQ. T141 is a substrate binding site. A disordered region spans residues 173-194; sequence SFVTYERKQPAAADRGAEESDE.

It belongs to the dihydrofolate reductase family.

It catalyses the reaction (6S)-5,6,7,8-tetrahydrofolate + NADP(+) = 7,8-dihydrofolate + NADPH + H(+). It functions in the pathway cofactor biosynthesis; tetrahydrofolate biosynthesis; 5,6,7,8-tetrahydrofolate from 7,8-dihydrofolate: step 1/1. Maximum activity at KCl concentration of 0.5 M and activity decreases with increasing concentration of KCl. Its function is as follows. Key enzyme in folate metabolism. Catalyzes an essential reaction for de novo glycine and purine synthesis, and for DNA precursor synthesis. The polypeptide is Dihydrofolate reductase HdrB (hdrB) (Haloferax volcanii (Halobacterium volcanii)).